The chain runs to 3080 residues: Adhesion G-protein coupled receptor G4 (3080 aa).

A signal peptide spans 1-27 (MKEHIIYQKLYGLILMSSFIFLSDTLS). Residues 28-2740 (LKGKKLDFFG…SRSTVDSVNE (2713 aa)) are Extracellular-facing. One can recognise a Pentraxin (PTX) domain in the interval 29–228 (KGKKLDFFGR…IPTVDRTLRC (200 aa)). Disulfide bonds link C58/C123 and C200/C228. D202 contributes to the Mg(2+) binding site. Residues N233, N487, N836, and N899 are each glycosylated (N-linked (GlcNAc...) asparagine). The span at 946–959 (SEGISAGSPTSGST) shows a compositional bias: polar residues. A disordered region spans residues 946–965 (SEGISAGSPTSGSTHIFGEP). N-linked (GlcNAc...) asparagine glycosylation is present at N1020. The tract at residues 1274–1348 (VTEMSPSKNS…ITPTLTSSNT (75 aa)) is disordered. 3 stretches are compositionally biased toward polar residues: residues 1277-1296 (MSPSKNSFISYSRGTPSLEM), 1305-1315 (TKISSHQTHSP), and 1324-1348 (SDGNLASSPTSGSTQITPTLTSSNT). N-linked (GlcNAc...) asparagine glycosylation is present at N1519. Residues 2109 to 2139 (SRTTITANPRTVSHPSSFSRKTMSPSTTDHT) show a composition bias toward polar residues. The disordered stretch occupies residues 2109 to 2141 (SRTTITANPRTVSHPSSFSRKTMSPSTTDHTLS). N-linked (GlcNAc...) asparagine glycans are attached at residues N2361 and N2640. The 157-residue stretch at 2578-2734 (MAFSIHSYEE…GVLMDLSRST (157 aa)) folds into the GAIN-B domain. 2 disulfide bridges follow: C2685-C2716 and C2704-C2718. The interval 2685–2734 (CAFWDFENNNGLGGWNSSGCKVKETNVNYTICQCDHLTHFGVLMDLSRST) is GPS. The interval 2723–2734 (HFGVLMDLSRST) is stachel. Residues 2741-2766 (QILALITYTGCGISSIFLGVAVVTYI) traverse the membrane as a helical segment. Topologically, residues 2767-2777 (AFHKLRKDYPA) are cytoplasmic. Residues 2778-2800 (KILINLCTALLMLNLVFLINSWL) traverse the membrane as a helical segment. Residues 2801–2806 (SSFQKV) are Extracellular-facing. A helical transmembrane segment spans residues 2807–2835 (GVCITAAVALHYFLLVSFTWMGLEAVHMY). An intrachain disulfide couples C2809 to C2886. Residues 2836–2849 (LALVKVFNIYIPNY) lie on the Cytoplasmic side of the membrane. A helical transmembrane segment spans residues 2850-2870 (ILKFCLVGWGIPAIMVAITVS). Residues 2871–2892 (VKKDLYGTLSPTTPFCWIKDDS) are Extracellular-facing. A helical membrane pass occupies residues 2893–2918 (IFYISVVAYFCLIFLMNLSMFCTVLV). The Cytoplasmic segment spans residues 2919-2937 (QLNSVKSQIQKTRRKMILH). Residues 2938–2961 (DLKGTMSLTFLLGLTWGFAFFAWG) traverse the membrane as a helical segment. Over 2962-2965 (PMRN) the chain is Extracellular. A helical transmembrane segment spans residues 2966-2989 (FFLYLFAIFNTLQGFFIFVFHCVM). The Cytoplasmic portion of the chain corresponds to 2990-3080 (KESVREQWQI…FDKDPYCSSP (91 aa)). The segment covering 3051–3065 (FKSLGSAQGTPSEIS) has biased composition (polar residues). Residues 3051 to 3080 (FKSLGSAQGTPSEISFPNDDFDKDPYCSSP) form a disordered region.

It belongs to the G-protein coupled receptor 2 family. Adhesion G-protein coupled receptor (ADGR) subfamily. In terms of assembly, homodimer; homodimerizes via its Pentraxin domain in a calcium-independent manner. Heterodimer of 2 chains generated by proteolytic processing; the large extracellular N-terminal fragment and the membrane-bound C-terminal fragment predominantly remain associated and non-covalently linked. In terms of processing, autoproteolytically processed at the GPS region of the GAIN-B domain; this cleavage modulates receptor activity. Post-translationally, N-glycosylated. Detected in fetal retina. Highly expressed in normal enterochromaffin cells and in neuroendocrine carcinoma. Detected in normal liver; highly expressed in primary liver carcinoma.

It is found in the membrane. Forms a heterodimer of 2 chains generated by proteolytic processing that remain associated through non-covalent interactions mediated by the GAIN-B domain. In the inactivated receptor, the Stachel sequence (also named stalk) is embedded in the GAIN-B domain, where it adopts a beta-strand conformation. On activation, the Stachel moves into the 7 transmembrane region and adopts a twisted hook-shaped configuration that forms contacts within the receptor, leading to coupling of a G-alpha protein, which activates signaling. The cleaved GAIN-B and N-terminal domains can then dissociate from the rest of the receptor. Its function is as follows. Orphan adhesion G-protein coupled receptor (aGPCR). Ligand binding causes a conformation change that triggers signaling via guanine nucleotide-binding proteins (G proteins) and modulates the activity of downstream effectors, such as adenylate cyclase. ADGRG4 is coupled to G(s) G proteins and mediates activation of adenylate cyclase activity. May be act as sensor of mechanical forces. This is Adhesion G-protein coupled receptor G4 from Homo sapiens (Human).